Reading from the N-terminus, the 442-residue chain is QWRF motif-containing protein 6 (442 aa).

Disordered regions lie at residues 1 to 144 (MEAK…LSQQ) and 221 to 240 (FSRLGLPLPPMAPKVPADTK). A compositionally biased stretch (basic residues) spans 57 to 66 (KQHHLQHHQI). Residues 80–89 (KMADGDENRS) are compositionally biased toward basic and acidic residues. Residues 264-267 (QWRF) carry the QWRF motif motif.

The protein belongs to the QWRF family.

This Arabidopsis thaliana (Mouse-ear cress) protein is QWRF motif-containing protein 6 (QWRF6).